A 177-amino-acid chain; its full sequence is Large ribosomal subunit protein uL6 (177 aa).

This sequence belongs to the universal ribosomal protein uL6 family. As to quaternary structure, part of the 50S ribosomal subunit.

In terms of biological role, this protein binds to the 23S rRNA, and is important in its secondary structure. It is located near the subunit interface in the base of the L7/L12 stalk, and near the tRNA binding site of the peptidyltransferase center. This is Large ribosomal subunit protein uL6 from Rickettsia peacockii (strain Rustic).